A 157-amino-acid polypeptide reads, in one-letter code: 2-C-methyl-D-erythritol 2,4-cyclodiphosphate synthase (157 aa).

Asp8 and His10 together coordinate a divalent metal cation. 4-CDP-2-C-methyl-D-erythritol 2-phosphate-binding positions include 8 to 10 (DVH) and 34 to 35 (HS). His42 contacts a divalent metal cation. 4-CDP-2-C-methyl-D-erythritol 2-phosphate is bound by residues 56–58 (DIG), 61–65 (FPDTD), 100–106 (AQAPKMA), 132–135 (TTTE), Phe139, and Arg142.

Belongs to the IspF family. As to quaternary structure, homotrimer. The cofactor is a divalent metal cation.

It carries out the reaction 4-CDP-2-C-methyl-D-erythritol 2-phosphate = 2-C-methyl-D-erythritol 2,4-cyclic diphosphate + CMP. Its pathway is isoprenoid biosynthesis; isopentenyl diphosphate biosynthesis via DXP pathway; isopentenyl diphosphate from 1-deoxy-D-xylulose 5-phosphate: step 4/6. Involved in the biosynthesis of isopentenyl diphosphate (IPP) and dimethylallyl diphosphate (DMAPP), two major building blocks of isoprenoid compounds. Catalyzes the conversion of 4-diphosphocytidyl-2-C-methyl-D-erythritol 2-phosphate (CDP-ME2P) to 2-C-methyl-D-erythritol 2,4-cyclodiphosphate (ME-CPP) with a corresponding release of cytidine 5-monophosphate (CMP). The protein is 2-C-methyl-D-erythritol 2,4-cyclodiphosphate synthase of Pseudomonas fluorescens (strain Pf0-1).